The following is a 75-amino-acid chain: Conotoxin Vc6a (75 aa).

The N-terminal stretch at 1–22 is a signal peptide; sequence MKLTCVVIVAVLFLTANTFATA. A propeptide spanning residues 23–49 is cleaved from the precursor; sequence DDPRNGLENLFLKAHHEMNPEASKLNE. 3 disulfides stabilise this stretch: C51-C66, C58-C69, and C65-C74.

As to expression, expressed by the venom duct.

It localises to the secreted. This Conus victoriae (Queen Victoria cone) protein is Conotoxin Vc6a.